The following is a 1673-amino-acid chain: NBPF family member NBPF26 (1673 aa).

4 EGF-like domains span residues 24–63 (HALQ…EYCQ), 64–102 (HRDP…EDCQ), 105–143 (TPHP…KECQ), and 144–180 (WTDA…QKCE). 17 disulfide bridges follow: Cys-28–Cys-41, Cys-35–Cys-51, Cys-53–Cys-62, Cys-68–Cys-79, Cys-73–Cys-90, Cys-92–Cys-101, Cys-109–Cys-121, Cys-115–Cys-131, Cys-133–Cys-142, Cys-148–Cys-159, Cys-153–Cys-168, Cys-170–Cys-179, Cys-186–Cys-198, Cys-192–Cys-207, Cys-209–Cys-218, Cys-225–Cys-236, and Cys-230–Cys-246. Residues 182–219 (DVNECDIPGHCQHGGTCLNLPGSYQCQCLQGFTGQYCD) enclose the EGF-like 5; calcium-binding domain. The EGF-like 6 domain maps to 221-258 (LYVPCAHSPCVNGGTCRQTGDFTFECNCLPVPDSTSSA). Residues 337–381 (RQFKEEKLAEQLKQAEELRQYKVLVHSQERELTQLKEKLREGRDA) are a coiled coil. 3 disordered regions span residues 423–463 (KLSP…KVPE), 713–734 (EKVQ…EVPE), and 782–828 (WEDA…EGYS). The span at 427-443 (ENDEDEDEDVQVEEDEK) shows a compositional bias: acidic residues. 13 consecutive Olduvai domains span residues 427–521 (ENDE…NILP), 698–790 (ENDN…HIIP), 791–879 (ENES…ATGP), 882–937 (SREL…VDMD), 938–1029 (EIEK…PSCP), 1032–1104 (SGEL…PSCP), 1107–1162 (SREL…LDVD), 1163–1255 (RIKK…RSKK), 1256–1348 (ERRR…PSCP), 1351–1423 (SREL…PSCP), 1426–1481 (SREL…LDVD), 1482–1574 (RIKK…RSKK), and 1575–1673 (ERRR…IFPQ). Residues 452 to 463 (EVQKTEESKVPE) are compositionally biased toward basic and acidic residues. 2 stretches are compositionally biased toward acidic residues: residues 792-801 (NESDDEEEEE) and 812-824 (ESEE…ESWD). Residues 1242 to 1280 (KGKGKKRRGRRSKKERRRGRKEGEEDQNPPCPRLSRELL) form a disordered region. Residues 1243–1261 (GKGKKRRGRRSKKERRRGR) are compositionally biased toward basic residues. The disordered stretch occupies residues 1561–1594 (KGKGKKRRGRRSKKERRRGRKEGEEDQNPPCPRL). A compositionally biased stretch (basic residues) spans 1562-1580 (GKGKKRRGRRSKKERRRGR).

This sequence belongs to the NBPF family.

It is found in the cytoplasm. In Homo sapiens (Human), this protein is NBPF family member NBPF26.